Reading from the N-terminus, the 185-residue chain is Ribosome-recycling factor (185 aa).

The protein belongs to the RRF family.

Its subcellular location is the cytoplasm. Responsible for the release of ribosomes from messenger RNA at the termination of protein biosynthesis. May increase the efficiency of translation by recycling ribosomes from one round of translation to another. In Campylobacter jejuni subsp. jejuni serotype O:23/36 (strain 81-176), this protein is Ribosome-recycling factor.